The sequence spans 416 residues: Putative F-box/kelch-repeat protein At1g12870 (416 aa).

One can recognise an F-box domain in the interval 27–76; the sequence is MIASSSLPDDVVEEIFLKLPVKALMRFKSLSKQWRSTLESCYFSQRHLKI. 2 Kelch repeats span residues 199-243 and 297-341; these read LVWL…PASA and CMYE…HVLD.

This Arabidopsis thaliana (Mouse-ear cress) protein is Putative F-box/kelch-repeat protein At1g12870.